A 334-amino-acid polypeptide reads, in one-letter code: Terpene synthase 1 (334 aa).

Mg(2+)-binding residues include Asp-82 and Asp-86. Residues 82–86 carry the D(D/E)XX(D/E) motif motif; the sequence is DDIFD. Residue Arg-184 coordinates substrate. Asn-230, Ser-234, and Glu-238 together coordinate Mg(2+). An NSE motif motif is present at residues 230–238; that stretch reads NDIYSYHRE. Residues 309–316 carry the WxxxxxRY motif motif; it reads WSESCTRY.

Belongs to the terpene synthase family. It depends on Mg(2+) as a cofactor.

The catalysed reaction is (2E,6E)-farnesyl diphosphate = gamma-muurolene + diphosphate. It carries out the reaction (2E,6E)-farnesyl diphosphate = alpha-muurolene + diphosphate. The enzyme catalyses (2E,6E)-farnesyl diphosphate = (-)-(E)-beta-caryophyllene + diphosphate. It catalyses the reaction (2E)-geranyl diphosphate = beta-myrcene + diphosphate. Functionally, terpene synthase that catalyzes the cyclization of farnesyl diphosphate (FPP) into a mixture of sesquiterpenes with gamma-muurolene as the most abundant compound and (-)-beta-caryophyllene, alpha-muurolene, and 4 unidentified sesquiterpenes as minor compoundss. TPS1 also shows monoterpene synthase activity and can also use geranyl diphosphate (GPP) as a substrate to convert it into a mixture of cyclic and acyclic monoterpenes, including myrcene and linalool. P.polycephalum has a unique biology and these volatile terpenoids could function in internal communication of P.polycephalum, to mark the territory that have been explored, or they may be involved in chemotaxis. The polypeptide is Terpene synthase 1 (Physarum polycephalum (Slime mold)).